The chain runs to 726 residues: Endo-1,4-beta-xylanase/feruloyl esterase (726 aa).

Residues 1 to 19 form the signal peptide; the sequence is MKKLLVALSLIAGSLTASA. One can recognise a GH10 domain in the interval 27-369; it reads YAAGPGLKDA…KRSLQIIRDF (343 aa). Glu161 functions as the Proton donor; for xylanase activity in the catalytic mechanism. Glu280 serves as the catalytic Nucleophile; for xylanase activity. Residues 370 to 726 are feruloyl esterase; the sequence is DAAMDNRKPK…LEKMAQSLFK (357 aa). Ser629 (nucleophile; for esterase activity) is an active-site residue.

The protein in the N-terminal section; belongs to the glycosyl hydrolase 10 (cellulase F) family. As to quaternary structure, monomer or homodimer.

It catalyses the reaction Endohydrolysis of (1-&gt;4)-beta-D-xylosidic linkages in xylans.. The catalysed reaction is feruloyl-polysaccharide + H2O = ferulate + polysaccharide.. Its pathway is glycan degradation; xylan degradation. Involved in degradation of plant cell wall polysaccharides. Has endo-xylanase activity towards substrates such as oat spelt xylan (OSX), acetylated xylo-oligosaccharides and acetylated xylan, producing primarily xylobiose; cannot hydrolyze xylobiose to xylose. Also has feruloyl esterase activity, releasing ferulic acid from methylferulate, and from the more natural substrates wheat bran, corn fiber, and XOS(FA,Ac), a corn fiber-derived substrate enriched in O-acetyl and ferulic acid esters. Exhibits negligible acetyl esterase activity on sugar acetates. Acts synergistically with Xyl3A to increase the release of xylose from xylan. Does not possess endoglucanase or mannanase activities since it is not able to hydrolyze carboxymethyl cellulose and locust bean gum. This Xylanibacter ruminicola (strain ATCC 19189 / DSM 19721 / CIP 105475 / JCM 8958 / 23) (Prevotella ruminicola) protein is Endo-1,4-beta-xylanase/feruloyl esterase.